The primary structure comprises 743 residues: MWRRRARSGGGGGGGGGGAAPRCRWWPAVLALLAAALPAARSRSLYSPSDPLELLGADTAERRLLGSPSAWAVEFFASWCGHCIHFAPTWRALAEDVREWRPAVMIAALDCADEANQQVCADFGITGFPTLKFFRAFSKKAEDGIRIAHPTATVADLRRAIITNLEQSGDAWPPACPPLEPASAEEVRSFFHRNTERYLALIFEQSNSFVGREVALDLLQYENVAVRRVLSSEEELVEKFGVTTFPSAYLLLRNGSFSRLPVHAEARSFYTYYLQTLSGVTRGSYRLNVTGSAINETRALQPAQADRSKVYVADLESTVHYTLRVEAGRPAVLAGAQLAALKCYVATLAKYFPGRPSVQTFLQSLDSWLRNWTEPELPRSALKEAVKNKEDASPAAVLPTNVTWVGCRGSEPHFRGYPCGLWTIFHLLTVQAAQGGPDEELPLEVLNTMRCYVKHFFGCQECAQHFEAMAAKSMDQVKSRREAVLWLWSHHNEVNARLAGGDTEDPQFPKLQWPPPDMCPQCHREERGVHTWDEAAVLSFLKEHFSLGNLYLDHAIPIPMAGEEAAASARLSTAGLREKEEEERKEEEEEGEKETEKPHREGETGRPGSSELRRPSIVRRNPRLRALGEDIVDLDSFSEQHFKSKALRAAGRHRRLSKRDTVALHHDAGWERLQVPESREEEEEGGVLRRSPWLRVLGLGFSRLDVSLCIALYFLSSMCLLGMYTFFRLRTRARKGRPGFPVA.

The signal sequence occupies residues 1 to 42 (MWRRRARSGGGGGGGGGGAAPRCRWWPAVLALLAAALPAARS). One can recognise a Thioredoxin domain in the interval 43-166 (RSLYSPSDPL…LRRAIITNLE (124 aa)). Active-site nucleophile residues include Cys80 and Cys83. 2 cysteine pairs are disulfide-bonded: Cys80/Cys83 and Cys111/Cys120. 5 N-linked (GlcNAc...) asparagine glycosylation sites follow: Asn254, Asn288, Asn295, Asn371, and Asn401. A disulfide bridge connects residues Cys407 and Cys419. The ERV/ALR sulfhydryl oxidase domain maps to 410-513 (SEPHFRGYPC…EDPQFPKLQW (104 aa)). Residues Arg415, Trp422, His426, Glu461, His465, 488–495 (WSHHNEVN), Lys510, and Trp513 contribute to the FAD site. An intrachain disulfide couples Cys459 to Cys462. Cys519 and Cys522 are joined by a disulfide. The disordered stretch occupies residues 567–617 (ASARLSTAGLREKEEEERKEEEEEGEKETEKPHREGETGRPGSSELRRPSI). Over residues 580–593 (EEEERKEEEEEGEK) the composition is skewed to acidic residues. Over residues 594 to 604 (ETEKPHREGET) the composition is skewed to basic and acidic residues. A helical transmembrane segment spans residues 707 to 727 (SLCIALYFLSSMCLLGMYTFF).

The protein belongs to the quiescin-sulfhydryl oxidase (QSOX) family. It depends on FAD as a cofactor. Post-translationally, N-glycosylated. O-glycosylated on Thr and Ser residues.

The protein localises to the golgi apparatus membrane. It is found in the secreted. The enzyme catalyses 2 R'C(R)SH + O2 = R'C(R)S-S(R)CR' + H2O2. Its function is as follows. Catalyzes the oxidation of sulfhydryl groups in peptide and protein thiols to disulfides with the reduction of oxygen to hydrogen peroxide. Plays a role in disulfide bond formation in a variety of extracellular proteins. In fibroblasts, required for normal incorporation of laminin into the extracellular matrix, and thereby for normal cell-cell adhesion and cell migration. The polypeptide is Sulfhydryl oxidase 1 (QSOX1) (Gallus gallus (Chicken)).